We begin with the raw amino-acid sequence, 689 residues long: tRNA wybutosine-synthesizing protein 4 (689 aa).

Residues 1–33 are disordered; sequence MTSTSKLDANQLARQRKKLEKDRRKKVYDDQQV. Basic residues predominate over residues 14–26; that stretch reads RQRKKLEKDRRKK. Residues Arg-84, Gly-111, Asp-137, 183–184, and Glu-215 contribute to the S-adenosyl-L-methionine site; that span reads DL.

It belongs to the methyltransferase superfamily. LCMT family.

The catalysed reaction is 7-[(3S)-3-amino-3-carboxypropyl]wyosine(37) in tRNA(Phe) + S-adenosyl-L-methionine = 7-[(3S)-(3-amino-3-methoxycarbonyl)propyl]wyosine(37) in tRNA(Phe) + S-adenosyl-L-homocysteine. The enzyme catalyses 7-[(3S)-(3-amino-3-methoxycarbonyl)propyl]wyosine(37) in tRNA(Phe) + S-adenosyl-L-methionine + CO2 = wybutosine(37) in tRNA(Phe) + S-adenosyl-L-homocysteine + 2 H(+). Its pathway is tRNA modification; wybutosine-tRNA(Phe) biosynthesis. In terms of biological role, probable S-adenosyl-L-methionine-dependent methyltransferase that acts as a component of the wybutosine biosynthesis pathway. Wybutosine is a hyper modified guanosine with a tricyclic base found at the 3'-position adjacent to the anticodon of eukaryotic phenylalanine tRNA. May methylate the carboxyl group of leucine residues to form alpha-leucine ester residues. This is tRNA wybutosine-synthesizing protein 4 (PPM2) from Candida albicans (strain SC5314 / ATCC MYA-2876) (Yeast).